Here is a 409-residue protein sequence, read N- to C-terminus: Elongation factor Tu (409 aa).

The region spanning 10-214 is the tr-type G domain; the sequence is KPHVNIGTIG…AVDSYIPDPE (205 aa). Residues 19–26 are G1; it reads GHVDHGKT. 19 to 26 serves as a coordination point for GTP; the sequence is GHVDHGKT. Thr26 contacts Mg(2+). Residues 60–64 form a G2 region; it reads GITIN. The interval 81–84 is G3; it reads DCPG. GTP is bound by residues 81–85 and 136–139; these read DCPGH and NKED. The tract at residues 136–139 is G4; sequence NKED. The G5 stretch occupies residues 174-176; sequence SGL.

As to quaternary structure, monomer.

The protein localises to the cytoplasm. The catalysed reaction is GTP + H2O = GDP + phosphate + H(+). GTP hydrolase that promotes the GTP-dependent binding of aminoacyl-tRNA to the A-site of ribosomes during protein biosynthesis. This is Elongation factor Tu from Nostoc sp. (strain PCC 7120 / SAG 25.82 / UTEX 2576).